A 776-amino-acid polypeptide reads, in one-letter code: LPS-assembly protein LptD (776 aa).

The signal sequence occupies residues 1–24; sequence MQHFSRTFLAASIATALFAPYAQA.

It belongs to the LptD family. As to quaternary structure, component of the lipopolysaccharide transport and assembly complex. Interacts with LptE and LptA.

The protein resides in the cell outer membrane. Together with LptE, is involved in the assembly of lipopolysaccharide (LPS) at the surface of the outer membrane. The polypeptide is LPS-assembly protein LptD (Vibrio vulnificus (strain CMCP6)).